Reading from the N-terminus, the 223-residue chain is MQLKPMEINPEMLNKVLTRLGVAGHWRFADVLGLEEESLGSVPAPACALLLLFPLTAQHENFRKKQIEELKGQEVSPKVYFMKQTIGNSCGTIGLIHAVANNQDKLEFEDGSVLKQFLSETEKLSPEDRAKCFEKNEAIQAAHDAVAQEGQCRVDDKVNFHFILFNNVDGHLYELDGRMPFPVNHGASSEDSLLQDAAKVCREFTEREQGEVRFSAVALCKAA.

Position 1 is an N-acetylmethionine (Met-1). Positions 2-221 (QLKPMEINPE…VRFSAVALCK (220 aa)) constitute a UCH catalytic domain. The tract at residues 5 to 10 (PMEINP) is interaction with ubiquitin. Cys-90 serves as the catalytic Nucleophile. Ser-125 bears the Phosphoserine mark. His-161 (proton donor) is an active-site residue. The interaction with ubiquitin stretch occupies residues 211–216 (EVRFSA). The S-farnesyl cysteine moiety is linked to residue Cys-220. A propeptide spans 221–223 (KAA) (removed in mature form).

The protein belongs to the peptidase C12 family. In terms of assembly, monomer. Homodimer. Interacts with COPS5 and SNCA. Post-translationally, O-glycosylated.

It is found in the cytoplasm. It localises to the endoplasmic reticulum membrane. It carries out the reaction Thiol-dependent hydrolysis of ester, thioester, amide, peptide and isopeptide bonds formed by the C-terminal Gly of ubiquitin (a 76-residue protein attached to proteins as an intracellular targeting signal).. In terms of biological role, ubiquitin-protein hydrolase involved both in the processing of ubiquitin precursors and of ubiquitinated proteins. This enzyme is a thiol protease that recognizes and hydrolyzes a peptide bond at the C-terminal glycine of ubiquitin. Also binds to free monoubiquitin and may prevent its degradation in lysosomes. The homodimer may have ATP-independent ubiquitin ligase activity. The polypeptide is Ubiquitin carboxyl-terminal hydrolase isozyme L1 (UCHL1) (Sus scrofa (Pig)).